The primary structure comprises 293 residues: Pyridoxal 5'-phosphate synthase subunit PdxS (293 aa).

A D-ribose 5-phosphate-binding site is contributed by Asp-23. Lys-80 acts as the Schiff-base intermediate with D-ribose 5-phosphate in catalysis. Gly-152 is a D-ribose 5-phosphate binding site. Arg-164 contacts D-glyceraldehyde 3-phosphate. D-ribose 5-phosphate is bound by residues Gly-213 and 234–235 (GS).

This sequence belongs to the PdxS/SNZ family. As to quaternary structure, in the presence of PdxT, forms a dodecamer of heterodimers.

It catalyses the reaction aldehydo-D-ribose 5-phosphate + D-glyceraldehyde 3-phosphate + L-glutamine = pyridoxal 5'-phosphate + L-glutamate + phosphate + 3 H2O + H(+). Its pathway is cofactor biosynthesis; pyridoxal 5'-phosphate biosynthesis. Functionally, catalyzes the formation of pyridoxal 5'-phosphate from ribose 5-phosphate (RBP), glyceraldehyde 3-phosphate (G3P) and ammonia. The ammonia is provided by the PdxT subunit. Can also use ribulose 5-phosphate and dihydroxyacetone phosphate as substrates, resulting from enzyme-catalyzed isomerization of RBP and G3P, respectively. This is Pyridoxal 5'-phosphate synthase subunit PdxS from Chloroflexus aggregans (strain MD-66 / DSM 9485).